A 200-amino-acid polypeptide reads, in one-letter code: Interleukin 17-like protein (200 aa).

Positions 1–26 are cleaved as a signal peptide; the sequence is MGNFFLFAMTLVVCSVIVLLTGVADS. Asparagine 46 carries N-linked (GlcNAc...) asparagine glycosylation. Intrachain disulfides connect cysteine 122–cysteine 175 and cysteine 127–cysteine 177. Asparagine 192 carries N-linked (GlcNAc...) asparagine glycosylation.

The protein belongs to the IL-17 family. Expressed in several tissues including hemocytes, gills, mantle, adductor muscle, labial palps, digestive glands and heart with highest levels in gills and lowest levels in adductor muscle and heart.

Its subcellular location is the secreted. The sequence is that of Interleukin 17-like protein from Magallana gigas (Pacific oyster).